Reading from the N-terminus, the 214-residue chain is Ribonuclease HII (214 aa).

The RNase H type-2 domain occupies 26–214 (EIVCGVDEAG…PVRAALDLIR (189 aa)). Residues Asp-32, Glu-33, and Asp-124 each contribute to the a divalent metal cation site.

Belongs to the RNase HII family. The cofactor is Mn(2+). It depends on Mg(2+) as a cofactor.

It is found in the cytoplasm. It carries out the reaction Endonucleolytic cleavage to 5'-phosphomonoester.. In terms of biological role, endonuclease that specifically degrades the RNA of RNA-DNA hybrids. This chain is Ribonuclease HII, found in Burkholderia cenocepacia (strain HI2424).